The chain runs to 71 residues: MTDGRRIERTSIDPKLLELLACPVTKGPLKWDPAKNELISAKAGLAYPVRDGVPVMLPGEARPLEPDKPRR.

Belongs to the UPF0434 family.

The chain is UPF0434 protein Meso_3270 from Chelativorans sp. (strain BNC1).